The sequence spans 803 residues: 3',5'-cyclic-AMP phosphodiesterase 4D (803 aa).

Residues 1 to 103 (MEAEGSSVPA…SGASRVRHRG (103 aa)) are disordered. Residues His-52 and His-56 each carry the phosphoserine modification. The segment covering 58 to 85 (PPPPPPSPQPQLQPPPPPPLPPPPPPPG) has biased composition (pro residues). Ser-137, Ser-294, Ser-296, Ser-343, and Ser-370 each carry phosphoserine. Residues 338–358 (EVEIPSPTQKEKEKKKRPMSQ) form a disordered region. One can recognise a PDEase domain in the interval 381-710 (VKTEQEDVLA…EWYQSTIPQS (330 aa)). Residue Lys-382 forms a Glycyl lysine isopeptide (Lys-Gly) (interchain with G-Cter in SUMO) linkage. Catalysis depends on His-457, which acts as the Proton donor. 3',5'-cyclic AMP is bound at residue His-457. His-457 is a binding site for AMP. Positions 461, 497, 498, and 615 each coordinate Zn(2+). AMP contacts are provided by Asp-498, Asp-615, Asn-618, Gln-666, and Phe-669. Asp-498 is a Mg(2+) binding site. Asp-498 is a Mn(2+) binding site. 3',5'-cyclic AMP contacts are provided by Gln-666 and Phe-669. 2 disordered regions span residues 705–724 (STIP…GRQG) and 732–803 (ELTL…CPDT). Residues 757–768 (CSDSKTLCTQDS) show a composition bias toward polar residues. The segment covering 774 to 789 (PLDEQVEEEAVAEEES) has biased composition (acidic residues).

The protein belongs to the cyclic nucleotide phosphodiesterase family. PDE4 subfamily. As to quaternary structure, homodimer for the long isoforms. Isoforms with truncated N-termini are monomeric. Binds ARRB2. Isoform 33 is part of a ternary complex containing PRKAR2A, PRKAR2B and AKAP9. Identified in a complex composed of RYR1, PDE4D, PKA, FKBP1A and protein phosphatase 1 (PP1). Interacts with PDE4DIP. Isoform 5 interacts (via N-terminal region) with SHANK2 (via proline-rich region); the interaction is increased in a PKA-dependent manner. Isoform 33, isoform 4, isoform 7, isoform 8 and isoform 9 but not isoform 32 and isoform 6 interact with SHANK2. Isoform 31 interacts weakly with SHANK2. Zn(2+) is required as a cofactor. Mg(2+) serves as cofactor. Requires Mn(2+) as cofactor. In terms of processing, isoform 1 and isoform 9 are rapidly activated by PKA through phosphorylation. Long isoforms that share a conserved PKA phosphorylation site in the N-terminus are also activated. Post-translationally, sumoylation of long isoforms by PIAS4 augments their activation by PKA phosphorylation and represses their inhibition by ERK phosphorylation. As to expression, expressed in epithelial cells. Isoform 33, isoform 4, isoform 5 and isoform 9 are expressed in brain. Isoform 33, isoform 5, isoform 8 and isoform 9 are expressed in heart (at protein level). Isoform 4 and isoform 6 are strongly expressed in cortex and cerebellum. Isoform 7 is strongly expressed in cortex and testis; weakly expressed in kidney, lung, spleen and cerebellum. Isoform 8 is strongly expressed in lung, heart and liver. Isoform 31, isoform 32, isoform 33, isoform 5 and isoform 9 are widely distributed.

Its subcellular location is the apical cell membrane. It is found in the cytoplasm. It localises to the membrane. The protein resides in the cytoskeleton. The protein localises to the microtubule organizing center. Its subcellular location is the centrosome. The catalysed reaction is 3',5'-cyclic AMP + H2O = AMP + H(+). Its pathway is purine metabolism; 3',5'-cyclic AMP degradation; AMP from 3',5'-cyclic AMP: step 1/1. Its activity is regulated as follows. Activated by phosphatidic acid. Inhibited by rolipram. In terms of biological role, hydrolyzes the second messenger cAMP, which is a key regulator of many important physiological processes. The chain is 3',5'-cyclic-AMP phosphodiesterase 4D (Pde4d) from Rattus norvegicus (Rat).